The sequence spans 213 residues: Probable elongation factor 1-beta/1-delta 1 (213 aa).

Belongs to the EF-1-beta/EF-1-delta family. In terms of assembly, EF-1 is composed of 4 subunits: alpha, beta, delta, and gamma.

EF-1-beta and EF-1-delta stimulate the exchange of GDP bound to EF-1-alpha to GTP. This Caenorhabditis elegans protein is Probable elongation factor 1-beta/1-delta 1 (eef-1B.1).